The chain runs to 118 residues: Large ribosomal subunit protein bL20 (118 aa).

Belongs to the bacterial ribosomal protein bL20 family.

In terms of biological role, binds directly to 23S ribosomal RNA and is necessary for the in vitro assembly process of the 50S ribosomal subunit. It is not involved in the protein synthesizing functions of that subunit. This is Large ribosomal subunit protein bL20 from Bacillus mycoides (strain KBAB4) (Bacillus weihenstephanensis).